A 321-amino-acid chain; its full sequence is uncharacterized protein (321 aa).

Residues 1–58 (MTPAQLRAYSAVVRLGSVRAAAAELGLSDAGVSMHVAALRKELDDPLFTRTGAGLAFT) form the HTH lysR-type domain. A DNA-binding region (H-T-H motif) is located at residues 18 to 37 (VRAAAAELGLSDAGVSMHVA).

Belongs to the LysR transcriptional regulatory family.

This is an uncharacterized protein from Mycobacterium tuberculosis (strain CDC 1551 / Oshkosh).